The following is a 504-amino-acid chain: Cytochrome P450 6B7 (504 aa).

C445 lines the heme pocket.

This sequence belongs to the cytochrome P450 family. Requires heme as cofactor.

It is found in the endoplasmic reticulum membrane. The protein resides in the microsome membrane. It carries out the reaction an organic molecule + reduced [NADPH--hemoprotein reductase] + O2 = an alcohol + oxidized [NADPH--hemoprotein reductase] + H2O + H(+). This is Cytochrome P450 6B7 (CYP6B7) from Helicoverpa armigera (Cotton bollworm).